The following is a 429-amino-acid chain: Ribosomal RNA small subunit methyltransferase B (429 aa).

Residues Cys-254–Lys-260, Asp-277, Asp-303, and Asp-322 each bind S-adenosyl-L-methionine. Cys-375 (nucleophile) is an active-site residue. The segment at Ala-397–Asp-419 is disordered. Positions Glu-400 to Leu-412 are enriched in polar residues.

Belongs to the class I-like SAM-binding methyltransferase superfamily. RsmB/NOP family.

The protein resides in the cytoplasm. The catalysed reaction is cytidine(967) in 16S rRNA + S-adenosyl-L-methionine = 5-methylcytidine(967) in 16S rRNA + S-adenosyl-L-homocysteine + H(+). Specifically methylates the cytosine at position 967 (m5C967) of 16S rRNA. This chain is Ribosomal RNA small subunit methyltransferase B, found in Salmonella agona (strain SL483).